Here is a 688-residue protein sequence, read N- to C-terminus: S-adenosyl-L-methionine-dependent tRNA 4-demethylwyosine synthase (688 aa).

The region spanning 91-247 (LCVFYSTLGG…ALLQWTRSVA (157 aa)) is the Flavodoxin-like domain. FMN contacts are provided by residues 97–101 (TLGGT) and 187–221 (VFGL…RRLA). The 240-residue stretch at 341–580 (YGIRSHLCME…FVKKLIEYID (240 aa)) folds into the Radical SAM core domain. Residues Cys357, Cys361, and Cys364 each coordinate [4Fe-4S] cluster.

Belongs to the TYW1 family. It depends on [4Fe-4S] cluster as a cofactor.

It catalyses the reaction N(1)-methylguanosine(37) in tRNA(Phe) + pyruvate + S-adenosyl-L-methionine = 4-demethylwyosine(37) in tRNA(Phe) + 5'-deoxyadenosine + L-methionine + CO2 + H2O. It participates in tRNA modification; wybutosine-tRNA(Phe) biosynthesis. Its function is as follows. Probable component of the wybutosine biosynthesis pathway. Wybutosine is a hyper modified guanosine with a tricyclic base found at the 3'-position adjacent to the anticodon of eukaryotic phenylalanine tRNA. Catalyzes the condensation of N-methylguanine with 2 carbon atoms from pyruvate to form the tricyclic 4-demethylwyosine, an intermediate in wybutosine biosynthesis. This chain is S-adenosyl-L-methionine-dependent tRNA 4-demethylwyosine synthase (tyw1), found in Schizosaccharomyces pombe (strain 972 / ATCC 24843) (Fission yeast).